The chain runs to 139 residues: Metallothiol transferase FosB (139 aa).

Positions 4–119 constitute a VOC domain; sequence GINHITYSVS…DGHKLELHTG (116 aa). His-7, His-66, and Glu-115 together coordinate Mg(2+). The active-site Proton donor/acceptor is the Glu-115.

The protein belongs to the fosfomycin resistance protein family. FosB subfamily. In terms of assembly, homodimer. The cofactor is Mg(2+).

It is found in the cytoplasm. In terms of biological role, metallothiol transferase which confers resistance to fosfomycin by catalyzing the addition of a thiol cofactor to fosfomycin. L-cysteine is probably the physiological thiol donor. This chain is Metallothiol transferase FosB, found in Staphylococcus haemolyticus.